The sequence spans 693 residues: Glycine--tRNA ligase beta subunit (693 aa).

This sequence belongs to the class-II aminoacyl-tRNA synthetase family. Tetramer of two alpha and two beta subunits.

It localises to the cytoplasm. The catalysed reaction is tRNA(Gly) + glycine + ATP = glycyl-tRNA(Gly) + AMP + diphosphate. This is Glycine--tRNA ligase beta subunit from Vibrio vulnificus (strain YJ016).